An 852-amino-acid polypeptide reads, in one-letter code: Bifunctional isopimaradiene synthase, chloroplastic (852 aa).

A chloroplast-targeting transit peptide spans 1–53; sequence HHLTANTQSIPHFSTTLNAGSSARKRRSLYLRWGKGSNKIIACVGEGATSVPY. Lysine 252 contacts substrate. Residues aspartate 385 and aspartate 387 each coordinate Mg(2+). The DXDD motif signature appears at 385-388; it reads DIDD. Lysine 472 contacts substrate. Mg(2+) contacts are provided by aspartate 604, aspartate 608, asparagine 748, threonine 752, and glutamate 756. Residues 604–608 carry the DDXXD motif motif; sequence DDLYD.

It belongs to the terpene synthase family. Tpsd subfamily. Mg(2+) is required as a cofactor.

It is found in the plastid. The protein localises to the chloroplast. The enzyme catalyses (2E,6E,10E)-geranylgeranyl diphosphate = (+)-copalyl diphosphate. It carries out the reaction (+)-copalyl diphosphate = isopimara-7,15-diene + diphosphate. It functions in the pathway terpene metabolism; oleoresin biosynthesis. Its function is as follows. Involved in defensive oleoresin formation in conifers in response to insect attack or other injury. Involved in diterpene (C20) olefins biosynthesis. Bifunctional enzyme that catalyzes two sequential cyclizations of geranylgeranyl diphosphate (GGPP) to isopimara-7,15-diene. This chain is Bifunctional isopimaradiene synthase, chloroplastic (TPS-ISO), found in Abies balsamea (Balsam fir).